The primary structure comprises 279 residues: MHKSVQDIVNMKKGKKKVSVITGYDYTLASLCDKAGIDVLLVGDSAGMVMLGYENTIPVTMDQMCMFTEAVSRARNNALLVADLPFMSYQASIEDAINNSGKLIKAGADAVKLEGGSIMAETISAIVDVGIPVMGHIGLQPQTTMLSQGYKVQGRTKDSAMQLIQDAKELEEAGVFSIALEMVSHEVAQIISETVSAPTIGIGSGVNCDGQVLVVQDLLGMYDKIKPKFAKRYMNLSEDIVKSLEDYKNDVESNTFPAEENWFSMDPEELKKLREQIGS.

Asp-44 and Asp-83 together coordinate Mg(2+). Residues 44 to 45, Asp-83, and Lys-112 contribute to the 3-methyl-2-oxobutanoate site; that span reads DS. A Mg(2+)-binding site is contributed by Glu-114. Glu-181 acts as the Proton acceptor in catalysis.

This sequence belongs to the PanB family. In terms of assembly, homodecamer; pentamer of dimers. Mg(2+) serves as cofactor.

It localises to the cytoplasm. The enzyme catalyses 3-methyl-2-oxobutanoate + (6R)-5,10-methylene-5,6,7,8-tetrahydrofolate + H2O = 2-dehydropantoate + (6S)-5,6,7,8-tetrahydrofolate. Its pathway is cofactor biosynthesis; coenzyme A biosynthesis. In terms of biological role, catalyzes the reversible reaction in which hydroxymethyl group from 5,10-methylenetetrahydrofolate is transferred onto alpha-ketoisovalerate to form ketopantoate. The polypeptide is 3-methyl-2-oxobutanoate hydroxymethyltransferase (Nitrosopumilus maritimus (strain SCM1)).